The sequence spans 573 residues: MMKFSVIVPTYNSEKYITELLNSLAKQDFPKTEFEVVVVDDCSTDQTLQIVEKYRNKLNLKVSQLETNSGGPGKPRNVALKQAEGEFVLFVDSDDYINKETLKDAAAFIDEHHSDVLLIKMKGVNGRGVPQSMFKETAPEVTLLNSRIIYTLSPTKIYRTTLLKDNDIYFPEELKSAEDQLFTMKAYLNANRISVLSDKAYYYATKREGEHMSSAYVSPEDFYEVMRLIAVEILNADLEEAHKDQILAEFLNRHFSFSRTNGFSLKVKLEDQPQWINALGDFIQAVPERVDALVMSKLRPLLHYARAKDIDNYRTVEESYRQGQYYRFDIVDGKLNIQFNEGEPYFEGIDIAKPKVKMTAFKFDNHKIVTELTLNEFMIGEGHYDVRLKLHSRNKKHTMYVPLSVNANKQYRFNIMLEDIKAYLPKEKIWDVFLEVQIGTEVFEVRVGNQRNKYAYTAETSALIHLNNDFYRLTPYFTKDFNNISLYFTAITLTDSISLKLKGKNKIILTGLDRGYVFEEGMASVVLKDDMIMGMLSQTSENEVEILLSKDIKKRDFKNIVKLNTAHMTYSLK.

UDP-N-acetyl-alpha-D-glucosamine-binding positions include Pro-9, Asp-41, Asn-68, Arg-76, 92–94 (DSD), Arg-127, and Glu-178. Position 94 (Asp-94) interacts with Mn(2+). Asp-179 serves as the catalytic Proton acceptor. UDP-N-acetyl-alpha-D-glucosamine-binding positions include Arg-207 and 211-213 (HMS).

This sequence belongs to the glycosyltransferase 2 family. Homotrimer. It depends on Mn(2+) as a cofactor.

It carries out the reaction 4-O-[(D-ribitylphospho)(n)-di{(2R)-glycerylphospho}]-N-acetyl-beta-D-mannosaminyl-(1-&gt;4)-N-acetyl-alpha-D-glucosaminyl di-trans,octa-cis-undecaprenyl diphosphate + n UDP-N-acetyl-alpha-D-glucosamine = 4-O-([2-N-acetyl-beta-D-glucosaminyl-1-D-ribitylphospho](n)-di{[2R]-1-glycerylphospho})-N-acetyl-beta-D-mannosaminyl-(1-&gt;4)-N-acetyl-alpha-D-glucosaminyl di-trans,octa-cis-undecaprenyl diphosphate + n UDP + n H(+). Its pathway is cell wall biogenesis; poly(ribitol phosphate) teichoic acid biosynthesis. Its function is as follows. Attaches beta-O-GlcNAc (beta-O-N-acetyl-D-glucosamine) residues to the C4 position of poly(RboP)-wall teichoic acids (WTAs). Prefers UDP-GlcNAc as a donor substrate and is specific for poly(ribitol phosphate) WTAs. Can also use UDP-Glc and UDP-GalNAc, but not UDP-galactose or UDP-glucuronic acid. Mediates beta-lactam resistance in methicillin resistant Staphylococcus aureus (MRSA) strains. This Staphylococcus aureus (strain MW2) protein is Poly(ribitol-phosphate) beta-N-acetylglucosaminyltransferase TarS.